Reading from the N-terminus, the 265-residue chain is Interleukin-2 receptor subunit alpha (265 aa).

The N-terminal stretch at 1–21 is a signal peptide; the sequence is MDSYLLMWGLLTLIMVPGCFA. Residues 22–84 form the Sushi 1 domain; sequence ELCDDDPPEI…SWDNQCQCTS (63 aa). The Extracellular portion of the chain corresponds to 22–240; it reads ELCDDDPPEI…ETFIFTTEYQ (219 aa). 3 disulfide bridges follow: Cys24–Cys67, Cys49–Cys80, and Cys51–Cys82. 2 N-linked (GlcNAc...) asparagine glycosylation sites follow: Asn70 and Asn89. Over residues 87-98 the composition is skewed to polar residues; that stretch reads TRNTTKQVTPQP. A disordered region spans residues 87–123; the sequence is TRNTTKQVTPQPEEQKERKTTEMQSPMQPVDQASLPG. The 64-residue stretch at 123-186 folds into the Sushi 2 domain; sequence GHCREPPPWE…WTQPQLICTG (64 aa). 2 cysteine pairs are disulfide-bonded: Cys125–Cys168 and Cys152–Cys184. Residues 190–210 form a disordered region; sequence TSQFPGEEKPQASPEGRPESE. Over residues 195–209 the composition is skewed to basic and acidic residues; it reads GEEKPQASPEGRPES. A helical transmembrane segment spans residues 241 to 259; that stretch reads VAVAGCVFLLISVLLLSGL. At 260–265 the chain is on the cytoplasmic side; it reads TWQRRQ.

Non-covalent dimer of an alpha and a beta subunit. IL2R exists in 3 different forms: a high affinity dimer, an intermediate affinity monomer (beta subunit), and a low affinity monomer (alpha subunit). The high and intermediate affinity forms also associate with a gamma subunit.

Its subcellular location is the membrane. Receptor for interleukin-2. The receptor is involved in the regulation of immune tolerance by controlling regulatory T cells (TREGs) activity. TREGs suppress the activation and expansion of autoreactive T-cells. The sequence is that of Interleukin-2 receptor subunit alpha (IL2RA) from Pan troglodytes (Chimpanzee).